The chain runs to 352 residues: Ion-translocating oxidoreductase complex subunit D (352 aa).

The next 4 membrane-spanning stretches (helical) occupy residues 20–40 (IMLLVLLAAVPGIAAQLWFFG), 42–62 (GTLVQILLASVSALLAEALVL), 89–109 (IPPLAPWWMVVLGTVFAVIIA), and 123–143 (PAMIGYVVLLISFPVQMTSWL). The residue at position 187 (T187) is an FMN phosphoryl threonine. Helical transmembrane passes span 214–234 (ILAGAGWQWVNLAWLAGGVWL), 242–262 (WHVPLSFLVTLALCATLGWLF), 267–287 (LAAPQIHLLSGATMLGAFFIL), 301–321 (LIFGALAGLLVWMIRSFGGYP), and 322–342 (DGVAFAVLLANITVPLIDYYT).

It belongs to the NqrB/RnfD family. As to quaternary structure, the complex is composed of six subunits: RsxA, RsxB, RsxC, RsxD, RsxE and RsxG. It depends on FMN as a cofactor.

The protein localises to the cell inner membrane. Its function is as follows. Part of a membrane-bound complex that couples electron transfer with translocation of ions across the membrane. Required to maintain the reduced state of SoxR. The polypeptide is Ion-translocating oxidoreductase complex subunit D (Escherichia coli (strain UTI89 / UPEC)).